A 239-amino-acid chain; its full sequence is Probable 2-phosphosulfolactate phosphatase (239 aa).

This sequence belongs to the ComB family. It depends on Mg(2+) as a cofactor.

The enzyme catalyses (2R)-O-phospho-3-sulfolactate + H2O = (2R)-3-sulfolactate + phosphate. The protein is Probable 2-phosphosulfolactate phosphatase of Clostridium botulinum (strain 657 / Type Ba4).